A 493-amino-acid chain; its full sequence is Tripartite motif-containing protein 5 (493 aa).

Ala-2 is modified (N-acetylalanine). The RING-type zinc finger occupies 15-59 (CPICLELLTQPLSLDCGHSFCQACLTANHKKSTLDKGERSCPVCR). Ser-86 bears the Phosphoserine mark. Residues 90–132 (QKVDHCARHGEKLLLFCKEDGKVICWLCERSQEHRGHHTFLTE) form a B box-type zinc finger. Positions 95, 98, 117, and 123 each coordinate Zn(2+). A coiled-coil region spans residues 131-223 (TEEVAQKYQV…LTKSETEMVQ (93 aa)). The tract at residues 185–198 (FEQLRDILDWEESN) is required for interaction with GABARAP and for autophagy. Positions 281–493 (LKGMLEVFRE…VPMTLCSPSS (213 aa)) constitute a B30.2/SPRY domain.

The protein belongs to the TRIM/RBCC family. In terms of assembly, can form homodimers and homotrimers. In addition to lower-order dimerization, also exhibits a higher-order multimerization and both low- and high-order multimerizations are essential for its restriction activity. Interacts with BTBD1 and BTBD2. Interacts with PSMC4, PSMC5, PSMD7 and HSPA8/HSC70. Interacts (via B30.2/SPRY domain) with HSPA1A/B. Interacts with PSMC2, MAP3K7/TAK1, TAB2 and TAB3. Interacts with SQSTM1. Interacts with TRIM6 and TRIM34. Interacts with ULK1 (phosphorylated form), GABARAP, GABARAPL1, GABARAPL2, MAP1LC3A, MAP1LC3C and BECN1. Post-translationally, degraded in a proteasome-independent fashion in the absence of viral infection but in a proteasome-dependent fashion following exposure to restriction sensitive virus. Autoubiquitinated in a RING finger- and UBE2D2-dependent manner. Monoubiquitinated by TRIM21. Deubiquitinated by Yersinia YopJ. Ubiquitination may not lead to proteasomal degradation.

The protein localises to the cytoplasm. It is found in the nucleus. The catalysed reaction is S-ubiquitinyl-[E2 ubiquitin-conjugating enzyme]-L-cysteine + [acceptor protein]-L-lysine = [E2 ubiquitin-conjugating enzyme]-L-cysteine + N(6)-ubiquitinyl-[acceptor protein]-L-lysine.. It functions in the pathway protein modification; protein ubiquitination. Its function is as follows. Capsid-specific restriction factor that prevents infection from non-host-adapted retroviruses. Blocks viral replication early in the life cycle, after viral entry but before reverse transcription. In addition to acting as a capsid-specific restriction factor, also acts as a pattern recognition receptor that activates innate immune signaling in response to the retroviral capsid lattice. Binding to the viral capsid triggers its E3 ubiquitin ligase activity, and in concert with the heterodimeric ubiquitin conjugating enzyme complex UBE2V1-UBE2N (also known as UBC13-UEV1A complex) generates 'Lys-63'-linked polyubiquitin chains, which in turn are catalysts in the autophosphorylation of the MAP3K7/TAK1 complex (includes TAK1, TAB2, and TAB3). Activation of the MAP3K7/TAK1 complex by autophosphorylation results in the induction and expression of NF-kappa-B and MAPK-responsive inflammatory genes, thereby leading to an innate immune response in the infected cell. Plays a role in regulating autophagy through activation of autophagy regulator BECN1 by causing its dissociation from its inhibitors BCL2 and TAB2. The chain is Tripartite motif-containing protein 5 (TRIM5) from Pongo pygmaeus (Bornean orangutan).